The primary structure comprises 554 residues: MPVQLTTALRVVGTSLFALVVLGGILAAYVTGYQFIHTEKHYLSFGLYGAILGLHLLIQSLFAFLEHRRMRRAGRPLKLHCSQRPRSVALCIAAYQEDPEYLRKCLRSAQRIAFPNLKVVMVVDGNRQEDTYMLDIFHEVLGGTEQAGFFVWRSNFHEAGEGETEASLQEGMERVRAVVWASTFSCIMQKWGGKREVMYTAFKALGNSVDYIQVCDSDTVLDPACTIEMLRVLEEDPQVGGVGGDVQILNKYDSWISFLSSVRYWMAFNVERACQSYFGCVQCISGPLGMYRNSLLQQFLEDWYHQKFLGSKCSFGDDRHLTNRVLSLGYRTKYTARSKCLTETPTRYLRWLNQQTRWSKSYFREWLYNSLWFHKHHLWMTYESVVTGFFPFFLIATVIQLFYRGRIWNILLFLLTVQLVGIIKATYACFLRGNAEMIFMSLYSLLYMSSLLPAKIFAIATINKSGWGTSGRKTIVVNFIGLIPVSIWVAVLLGGLAYTAYCQDLFSETELAFLVSGAILYGCYWVALLMLYLAIIARRCGKKPEQYSLAFAEV.

Topologically, residues 1–15 (MPVQLTTALRVVGTS) are cytoplasmic. A helical transmembrane segment spans residues 16–36 (LFALVVLGGILAAYVTGYQFI). Residues 37-44 (HTEKHYLS) lie on the Extracellular side of the membrane. The helical transmembrane segment at 45-65 (FGLYGAILGLHLLIQSLFAFL) threads the bilayer. Residues 66 to 378 (EHRRMRRAGR…NSLWFHKHHL (313 aa)) are Cytoplasmic-facing. Residues 379-399 (WMTYESVVTGFFPFFLIATVI) form a helical membrane-spanning segment. Over 400-409 (QLFYRGRIWN) the chain is Extracellular. Residues 410–430 (ILLFLLTVQLVGIIKATYACF) form a helical membrane-spanning segment. Residues 431–441 (LRGNAEMIFMS) are Cytoplasmic-facing. A helical transmembrane segment spans residues 442-462 (LYSLLYMSSLLPAKIFAIATI). Asn-463 carries an N-linked (GlcNAc...) asparagine glycan. Over 463 to 474 (NKSGWGTSGRKT) the chain is Extracellular. Residues 475–495 (IVVNFIGLIPVSIWVAVLLGG) form a helical membrane-spanning segment. The Cytoplasmic portion of the chain corresponds to 496-516 (LAYTAYCQDLFSETELAFLVS). A helical membrane pass occupies residues 517 to 537 (GAILYGCYWVALLMLYLAIIA). The Extracellular portion of the chain corresponds to 538-554 (RRCGKKPEQYSLAFAEV).

Belongs to the NodC/HAS family. It depends on Mg(2+) as a cofactor. O-GlcNAcylation increases the hyaluronan synthase activity, HAS3 stability and its plasma membrane residence. The concentration of UDP-GlcNAc controls the level of O-GlcNAc modification.

It localises to the cell membrane. It is found in the golgi apparatus membrane. The protein localises to the golgi apparatus. The protein resides in the trans-Golgi network membrane. Its subcellular location is the cytoplasmic vesicle. It catalyses the reaction [hyaluronan](n) + UDP-N-acetyl-alpha-D-glucosamine = N-acetyl-beta-D-glucosaminyl-(1-&gt;4)-[hyaluronan](n) + UDP + H(+). The catalysed reaction is N-acetyl-beta-D-glucosaminyl-(1-&gt;4)-[hyaluronan](n) + UDP-alpha-D-glucuronate = [hyaluronan](n+1) + UDP + H(+). The protein operates within glycan biosynthesis; hyaluronan biosynthesis. Its function is as follows. Catalyzes the addition of GlcNAc or GlcUA monosaccharides to the nascent hyaluronan polymer. Therefore, it is essential to hyaluronan synthesis a major component of most extracellular matrices that has a structural role in tissues architectures and regulates cell adhesion, migration and differentiation. This is one of three isoenzymes responsible for cellular hyaluronan synthesis. The polypeptide is Hyaluronan synthase 3 (Has3) (Mus musculus (Mouse)).